Reading from the N-terminus, the 52-residue chain is Large ribosomal subunit protein eL39 (52 aa).

It belongs to the eukaryotic ribosomal protein eL39 family.

The polypeptide is Large ribosomal subunit protein eL39 (Desulfurococcus amylolyticus (strain DSM 18924 / JCM 16383 / VKM B-2413 / 1221n) (Desulfurococcus kamchatkensis)).